Reading from the N-terminus, the 189-residue chain is GDIFYPGYCPDVKPVNDFDLSAFAGAWHEIAKLPLENENQGKCTIAEYKYDGKKASVYNSFVSNGVKEYMEGDLEIAPDAKYTKQGKYVMTFKFGQRVVNLVPWVLATDYKNYAINYNCDYHPDKKAHSIHAWILSKSKVLEGNTKEVVDNVLKTFSHLIDASKFISNDFSEAACQYSTTYSLTGPDRH.

Intrachain disulfides connect Cys9-Cys119 and Cys43-Cys175.

This sequence belongs to the calycin superfamily. Lipocalin family. Homotetramer. In terms of tissue distribution, synthesized only in the caterpillars, apparently by the epidermis and secreted into the hemolymph. The protein is passed over from the larval hemolymph to that of pupae and adults and is sequestered in the eggs.

The protein localises to the secreted. Functionally, this protein binds a chromophore: biliverdin IX, isomer gamma. Mixed with lipoprotein-bound carotenes, this blue protein provides hornworms with their green cryptic coloration which serves a camouflage. This is Insecticyanin-A (INSA) from Manduca sexta (Tobacco hawkmoth).